A 250-amino-acid polypeptide reads, in one-letter code: MRKSIVAGNWKMHKNAAQTEELLNELIAKIPAKTNAQVIVAPTFVNLQAAAAKLKNTTIGVSAQNVHQAEGGAFTGEISADMLTSIGVNTVILGHSERRAIFHETDALIANKVDTALKHDMTVIFCFGEELKDRQSGNHFNIVENQLRDGVFHIAKESWSKIVLAYEPVWAIGTGETASPEQAQEMHEFIRETIRKAFGAEIADEVSILYGGSVKPENAKEIFSKPDVDGGLIGGAALKADDFLAIVTAI.

9–11 (NWK) is a binding site for substrate. The active-site Electrophile is the H95. E167 functions as the Proton acceptor in the catalytic mechanism. Substrate is bound by residues G173, S213, and 234-235 (GG).

Belongs to the triosephosphate isomerase family. Homodimer.

It is found in the cytoplasm. It carries out the reaction D-glyceraldehyde 3-phosphate = dihydroxyacetone phosphate. It participates in carbohydrate biosynthesis; gluconeogenesis. Its pathway is carbohydrate degradation; glycolysis; D-glyceraldehyde 3-phosphate from glycerone phosphate: step 1/1. Its function is as follows. Involved in the gluconeogenesis. Catalyzes stereospecifically the conversion of dihydroxyacetone phosphate (DHAP) to D-glyceraldehyde-3-phosphate (G3P). This is Triosephosphate isomerase from Flavobacterium johnsoniae (strain ATCC 17061 / DSM 2064 / JCM 8514 / BCRC 14874 / CCUG 350202 / NBRC 14942 / NCIMB 11054 / UW101) (Cytophaga johnsonae).